A 378-amino-acid polypeptide reads, in one-letter code: N-acetyldiaminopimelate deacetylase (378 aa).

Residue D72 is part of the active site. E131 (proton acceptor) is an active-site residue.

Belongs to the peptidase M20A family. N-acetyldiaminopimelate deacetylase subfamily.

The enzyme catalyses N-acetyl-(2S,6S)-2,6-diaminopimelate + H2O = (2S,6S)-2,6-diaminopimelate + acetate. It participates in amino-acid biosynthesis; L-lysine biosynthesis via DAP pathway; LL-2,6-diaminopimelate from (S)-tetrahydrodipicolinate (acetylase route): step 3/3. Catalyzes the conversion of N-acetyl-diaminopimelate to diaminopimelate and acetate. The protein is N-acetyldiaminopimelate deacetylase of Enterococcus faecalis (strain ATCC 700802 / V583).